We begin with the raw amino-acid sequence, 505 residues long: Histidine ammonia-lyase (505 aa).

A cross-link (5-imidazolinone (Ala-Gly)) is located at residues 141–143 (ASG). The residue at position 142 (Ser142) is a 2,3-didehydroalanine (Ser).

The protein belongs to the PAL/histidase family. Contains an active site 4-methylidene-imidazol-5-one (MIO), which is formed autocatalytically by cyclization and dehydration of residues Ala-Ser-Gly.

Its subcellular location is the cytoplasm. It carries out the reaction L-histidine = trans-urocanate + NH4(+). Its pathway is amino-acid degradation; L-histidine degradation into L-glutamate; N-formimidoyl-L-glutamate from L-histidine: step 1/3. The chain is Histidine ammonia-lyase from Bacillus anthracis.